An 82-amino-acid chain; its full sequence is Beta-defensin 119 (82 aa).

A signal peptide spans 1 to 19; the sequence is MKFFLFFVILLAMEPVISG. 3 cysteine pairs are disulfide-bonded: C26–C53, C33–C47, and C37–C54.

Belongs to the beta-defensin family.

It localises to the secreted. In terms of biological role, has antibacterial activity. This chain is Beta-defensin 119 (DEFB119), found in Canis lupus familiaris (Dog).